A 266-amino-acid chain; its full sequence is UPF0354 protein lmo1608 (266 aa).

It belongs to the UPF0354 family.

This chain is UPF0354 protein lmo1608, found in Listeria monocytogenes serovar 1/2a (strain ATCC BAA-679 / EGD-e).